The sequence spans 1279 residues: MGCTPSHNVIVNSVAKSGIQFFKKPKAILPGCQWGSPKCPIPLLVQSSTFCDSGGELHLGERLVEETVSSSKKLQAMAEGVRQLPKAMEGLIPESQTFQVNKPQGHRATDISFRTEGSHGTQEVDFSGKESKENTPQETSKGNRESVCHQPDSQDHCRQSATESKGRVDFPEPLVKAHQHAYAYLHTSLSRYEAIVRLVQQASQTWGLLRPMLNFLLLCFEEAGQLLSEISKDGDVLLQEVRGDLAWPLRKGEPWEQHPDLLQQLLQYTVSKLRALHGTVAALTGSFLEGSSSCLRSTAGHLEGKLSTKRGIDECLLRALGQLESLTSSHGDAGLLGPPLCSEDSGIGADNESVHSVEKLGKQASWDFAAELGEWKPGTAAQVEARPSGHAWQEGPYWTGSDRPQDCPLSSPRIAKVQPAVQDEARSASTSGAGAEAVTSGPSEAAESLPWDSLGAEIPVRTPLSRSSGLTDAPSLSEEEDCSPEEEDELSSTDLHPEPQKALPSRPRSSPDTRESLFQPYSKELRNPQAQEMILKMKEAISERIKFVPEPSRPQDWTEEEEGGTVVPPRPRSVSGSRGGPERQRRSQSEGCLKSHVEDPTLQELRRVQTDLSRRLEVFYALGATRQGQSRERCLPSRASVLWPPTNCRVSPSSAISKFKASLTQNFSILPNQDKSIFQKGSPCFDGEQPCQGKAEKLPNAIFCGKKSGRAPRDNERDIRACPTRPSVKTLIETFSPTESLRMPRNCRNLGSSPCLRKWGVPAMPPRFPIYRGLAPLYSKPQISPAAGWRPSAPFPSLPLAEVSESEDISGDVEEDLENLPPPPLEVLMDKSFAALECPECSQPAGSSLEETLLPGLQEASHPKRTWVSPRLKASMSPMDLLPSKGSGSSPRLHSTRSGSTRIVGDSRKLTLDLNSKQTASPSSEAKSRAQIQARAETIAGFSKQHQKAIPWHHTNPTPGQSRTLEPSLARFSRDPHSSEASRKGPERSLPRVRKASPQRAQWASQGDRRLQSLPSSHGPSQPGLPAVLSSPSPPLSPRTLSPPATRKTTSPPCQHPQSNPAPGSPPVRRTETNTPSSASCSSPSVSPSRGSKDSIHSEDSEATTAKASRNTCSIFYPAATSLFEAKSSSSTSHPQMLPEPGGLLRTPTGGWRGSSGQRLRADSQKRTVLNALNPLPFVRRTASDRQRQQGDQLQQSRSDWEFHSCQNSSSSSSSEENPKQELPPWNNSRVPELQGSSTKRASPLELCVLGHGLQPEARMNRGQDRPQPESQPQHKEIS.

The N-myristoyl glycine moiety is linked to residue G2. The S-palmitoyl cysteine moiety is linked to residue C3. Disordered regions lie at residues 101-168, 380-598, 802-821, 860-1107, and 1127-1279; these read NKPQ…KGRV, AAQV…SHVE, EVSE…ENLP, ASHP…TTAK, and KSSS…KEIS. The segment covering 126–168 has biased composition (basic and acidic residues); sequence FSGKESKENTPQETSKGNRESVCHQPDSQDHCRQSATESKGRV. Acidic residues predominate over residues 477 to 491; it reads SEEEDCSPEEEDELS. Basic and acidic residues-rich tracts occupy residues 535 to 547 and 580 to 598; these read LKMK…RIKF and GPER…SHVE. Residues 804 to 818 show a composition bias toward acidic residues; it reads SESEDISGDVEEDLE. 3 stretches are compositionally biased toward polar residues: residues 886–901, 913–925, and 955–965; these read GSGS…SGST, DLNS…PSSE, and TNPTPGQSRTL. Basic and acidic residues predominate over residues 972 to 990; it reads FSRDPHSSEASRKGPERSL. A compositionally biased stretch (polar residues) spans 1047-1062; that stretch reads RKTTSPPCQHPQSNPA. Over residues 1076-1090 the composition is skewed to low complexity; the sequence is PSSASCSSPSVSPSR. A compositionally biased stretch (basic and acidic residues) spans 1091–1100; the sequence is GSKDSIHSED. The segment covering 1226–1241 has biased composition (polar residues); the sequence is WNNSRVPELQGSSTKR. Positions 1259–1279 are enriched in basic and acidic residues; that stretch reads RMNRGQDRPQPESQPQHKEIS.

As to expression, specifically expressed in retina.

It localises to the cell projection. The protein localises to the cilium. The protein resides in the photoreceptor outer segment. Its subcellular location is the photoreceptor inner segment. Functionally, plays an essential role for normal photoreceptor cell maintenance and vision. The sequence is that of Photoreceptor cilium actin regulator from Mus musculus (Mouse).